The sequence spans 201 residues: Recombination protein RecR (201 aa).

A C4-type zinc finger spans residues C60–C75. The Toprim domain occupies S83 to P177.

This sequence belongs to the RecR family.

In terms of biological role, may play a role in DNA repair. It seems to be involved in an RecBC-independent recombinational process of DNA repair. It may act with RecF and RecO. The protein is Recombination protein RecR of Francisella philomiragia subsp. philomiragia (strain ATCC 25017 / CCUG 19701 / FSC 153 / O#319-036).